The chain runs to 235 residues: Caveolin-1 (235 aa).

Residues Met1–Thr161 lie on the Cytoplasmic side of the membrane. Residues Gly29–Lys72 form a disordered region. The segment at residues Ile162–Leu182 is an intramembrane region (helical). The Cytoplasmic segment spans residues Gly183–Val235. Residue Cys234 is the site of S-palmitoyl cysteine attachment.

The protein belongs to the caveolin family. As to quaternary structure, homooligomer containing 14-16 monomers per oligomer.

It is found in the golgi apparatus membrane. The protein localises to the cell membrane. It localises to the membrane. Its subcellular location is the caveola. Its function is as follows. May act as a scaffolding protein within caveolar membranes. Interacts directly with G-protein alpha subunits and can functionally regulate their activity. This chain is Caveolin-1 (cav-1), found in Caenorhabditis elegans.